A 700-amino-acid polypeptide reads, in one-letter code: Polyribonucleotide nucleotidyltransferase (700 aa).

2 residues coordinate Mg(2+): aspartate 485 and aspartate 491. Residues 552–611 form the KH domain; the sequence is PRITVIKINPEKIRDVIGKGGAVIRALTEETGTTIELEDDGTVKIASSNGEATKEAIRRI. The 69-residue stretch at 621 to 689 folds into the S1 motif domain; the sequence is GRIYNGKVIR…RQGRVRLSIK (69 aa).

Belongs to the polyribonucleotide nucleotidyltransferase family. As to quaternary structure, component of the RNA degradosome, which is a multiprotein complex involved in RNA processing and mRNA degradation. Mg(2+) is required as a cofactor.

Its subcellular location is the cytoplasm. It catalyses the reaction RNA(n+1) + phosphate = RNA(n) + a ribonucleoside 5'-diphosphate. Involved in mRNA degradation. Catalyzes the phosphorolysis of single-stranded polyribonucleotides processively in the 3'- to 5'-direction. This chain is Polyribonucleotide nucleotidyltransferase, found in Shewanella baltica (strain OS185).